Reading from the N-terminus, the 143-residue chain is Actinoxanthin (143 aa).

The signal sequence occupies residues 1–33; the sequence is MSLRHMSRRASRFGVVAVASIGLAAAAQSVAFA. Cystine bridges form between cysteine 69/cysteine 78 and cysteine 119/cysteine 124.

The protein belongs to the neocarzinostatin family.

Binds non-covalently to a chromophore which is the cytotoxic and mutagenic component of the antibiotic. The chromophore binds to DNA as a weak intercalator and causes single- and double-strand breaks. This Streptomyces globisporus protein is Actinoxanthin (axnA).